Here is a 434-residue protein sequence, read N- to C-terminus: Enolase (434 aa).

(2R)-2-phosphoglycerate is bound at residue Gln167. The active-site Proton donor is Glu209. The Mg(2+) site is built by Asp246, Glu291, and Asp318. (2R)-2-phosphoglycerate is bound by residues Lys343, Arg372, Ser373, and Lys394. Catalysis depends on Lys343, which acts as the Proton acceptor.

This sequence belongs to the enolase family. Component of the RNA degradosome, a multiprotein complex involved in RNA processing and mRNA degradation. Requires Mg(2+) as cofactor.

It localises to the cytoplasm. The protein localises to the secreted. Its subcellular location is the cell surface. The enzyme catalyses (2R)-2-phosphoglycerate = phosphoenolpyruvate + H2O. It participates in carbohydrate degradation; glycolysis; pyruvate from D-glyceraldehyde 3-phosphate: step 4/5. Its function is as follows. Catalyzes the reversible conversion of 2-phosphoglycerate (2-PG) into phosphoenolpyruvate (PEP). It is essential for the degradation of carbohydrates via glycolysis. The polypeptide is Enolase (Buchnera aphidicola subsp. Acyrthosiphon pisum (strain 5A)).